Here is an 864-residue protein sequence, read N- to C-terminus: MHERYVPADVEAAAQGDWRAADAYKTKEDSQKPKFYCVSMLPYPSGKLHMGHVRNYTINDVMYRYLRMNGYNTLMPMGWDAFGMPAENAAMANGVPPAKWTYDNIDYMKGQMQSMGLAIDWSREIATCKPDYYKWNQWLFLKMLEKGIAYKKTGTVNWDPVDQTVLANEQVIDGRGWRSGALVEKREIPMYYLRITQYADELLNDLDGLGWPERVKIMQQNWIGKSFGVNFGFPYELDGEKALLRVFTTRADTIMGVTFCAIAAEHPLATRLAQGKPELQAFIDECKRGGVAEADVATMEKKGIATGFSVTHPLTGEAVEVWIGNYVLMSYGEGAVMGVPGHDERDFAFAKKYGLPIKQVIAAEGQTYSLDAWQEWYGDKDAAVCVNSGKYDGLRYTEAVDAVAADLKAGGFGDKQVTWRLRDWGVSRQRYWGTPIPIIHCPSCGDVPVPEQDLPVVLPEDLVPDGTGNPLAKSEAFLNCTCPKCGAAAKRETDTMDTFVDSSWYFSRYTAPDADTMVDARTDYWMPMDQYIGGIEHAILHLLYSRFWTKVMRDLGLVKFGEPAKNLLTQGMVLNETYYREDATGKKTWYNPADVTVTHDDKGRPVGATLNADGQPVVLGGIEKMSKSKNNGVDPQVLIDQYGADTARLFTMFAAPPEQQLEWSGAGVEGASRFLRRVWSFGAGNREALAARAGFDAASLGDADKALRREIYSVLKQADFDYQRLQYNTVVSAAMKMLNAIDGAKGATPGVLRETYGVLLRVLYPVVPHVTFELWKALGYADEFGPLLDAPWPKVDEAALEQAEIELVLQVNGKVRGALKVAKDATREAIEVAAVADEAFAKFSDGKPAKKIVVVPGRLVNIVV.

Residues 42–52 (PYPSGKLHMGH) carry the 'HIGH' region motif. The 'KMSKS' region signature appears at 624-628 (KMSKS). An ATP-binding site is contributed by lysine 627.

The protein belongs to the class-I aminoacyl-tRNA synthetase family.

It is found in the cytoplasm. It catalyses the reaction tRNA(Leu) + L-leucine + ATP = L-leucyl-tRNA(Leu) + AMP + diphosphate. In Burkholderia vietnamiensis (strain G4 / LMG 22486) (Burkholderia cepacia (strain R1808)), this protein is Leucine--tRNA ligase.